The primary structure comprises 157 residues: Glycine-rich RNA-binding protein (157 aa).

Residues 6 to 84 enclose the RRM domain; it reads YRCFVGGLAW…RNITVNEAQS (79 aa). Residues 70 to 157 form a disordered region; sequence QELDGRNITV…YGGGGGGSRW (88 aa). 2 stretches are compositionally biased toward gly residues: residues 86–138 and 145–157; these read GSGG…GGYG and DGGY…GSRW.

May play a role in the biosynthesis and processing of heterogeneous nuclear RNA and in the maturation of specific mRNAs in response to wounding. This chain is Glycine-rich RNA-binding protein, found in Daucus carota (Wild carrot).